The primary structure comprises 142 residues: Large ribosomal subunit protein bL27m (142 aa).

The segment at 27-48 (TKKSAGSTKNGRTSQPKNLGLK) is disordered. Residues 30–43 (SAGSTKNGRTSQPK) are compositionally biased toward polar residues.

The protein belongs to the bacterial ribosomal protein bL27 family.

It is found in the mitochondrion. This Dictyostelium discoideum (Social amoeba) protein is Large ribosomal subunit protein bL27m (mrpl27).